Here is a 206-residue protein sequence, read N- to C-terminus: Pyridoxal 5'-phosphate synthase subunit PdxT (206 aa).

Glycine 59–serine 61 is an L-glutamine binding site. Cysteine 91 functions as the Nucleophile in the catalytic mechanism. Residues arginine 123 and isoleucine 151 to arginine 152 contribute to the L-glutamine site. Residues histidine 187 and glutamate 189 each act as charge relay system in the active site.

It belongs to the glutaminase PdxT/SNO family. In the presence of PdxS, forms a dodecamer of heterodimers. Only shows activity in the heterodimer.

The enzyme catalyses aldehydo-D-ribose 5-phosphate + D-glyceraldehyde 3-phosphate + L-glutamine = pyridoxal 5'-phosphate + L-glutamate + phosphate + 3 H2O + H(+). The catalysed reaction is L-glutamine + H2O = L-glutamate + NH4(+). It functions in the pathway cofactor biosynthesis; pyridoxal 5'-phosphate biosynthesis. Catalyzes the hydrolysis of glutamine to glutamate and ammonia as part of the biosynthesis of pyridoxal 5'-phosphate. The resulting ammonia molecule is channeled to the active site of PdxS. The sequence is that of Pyridoxal 5'-phosphate synthase subunit PdxT from Mycobacterium sp. (strain JLS).